Here is a 241-residue protein sequence, read N- to C-terminus: Uridylate kinase (241 aa).

An ATP-binding site is contributed by 12-15; that stretch reads KVSG. The interval 20–25 is involved in allosteric activation by GTP; that stretch reads GEKGTG. A UMP-binding site is contributed by G54. ATP is bound by residues G55 and R59. UMP-binding positions include D74 and 135 to 142; that span reads TGNPYFST. Positions 163, 169, and 172 each coordinate ATP.

This sequence belongs to the UMP kinase family. As to quaternary structure, homohexamer.

The protein localises to the cytoplasm. It carries out the reaction UMP + ATP = UDP + ADP. It participates in pyrimidine metabolism; CTP biosynthesis via de novo pathway; UDP from UMP (UMPK route): step 1/1. Its activity is regulated as follows. Allosterically activated by GTP. Inhibited by UTP. Catalyzes the reversible phosphorylation of UMP to UDP. The chain is Uridylate kinase from Lactobacillus johnsonii (strain CNCM I-12250 / La1 / NCC 533).